Reading from the N-terminus, the 267-residue chain is Large ribosomal subunit protein bL9m (267 aa).

The transit peptide at 1 to 52 (MAAPVVTAPGRALLRAGAGRLLRGGVQELLRPRHEGNAPDLACNFSLSQNRG) directs the protein to the mitochondrion.

It belongs to the bacterial ribosomal protein bL9 family. In terms of assembly, component of the mitochondrial large ribosomal subunit (mt-LSU). Mature mammalian 55S mitochondrial ribosomes consist of a small (28S) and a large (39S) subunit. The 28S small subunit contains a 12S ribosomal RNA (12S mt-rRNA) and 30 different proteins. The 39S large subunit contains a 16S rRNA (16S mt-rRNA), a copy of mitochondrial valine transfer RNA (mt-tRNA(Val)), which plays an integral structural role, and 52 different proteins.

The protein resides in the mitochondrion. This is Large ribosomal subunit protein bL9m (MRPL9) from Homo sapiens (Human).